Consider the following 327-residue polypeptide: 2-methoxy-6-polyprenyl-1,4-benzoquinol methylase, mitochondrial (327 aa).

A mitochondrion-targeting transit peptide spans 1–49; that stretch reads MAAPRSCVLWSYCGHGWSRLAGDCRLPGFRRSWLGATLSARSLSQEKRA. S-adenosyl-L-methionine contacts are provided by residues threonine 117, aspartate 171, and 199 to 200; that span reads DA.

Belongs to the class I-like SAM-binding methyltransferase superfamily. MenG/UbiE family. Component of a multi-subunit COQ enzyme complex, composed of at least COQ3, COQ4, COQ5, COQ6, COQ7 and COQ9. Interacts with PYURF; the interaction is direct, stabilizes COQ5 protein and associates PYURF with COQ enzyme complex.

The protein resides in the mitochondrion inner membrane. The catalysed reaction is 2-methoxy-6-(all-trans-decaprenyl)benzene-1,4-diol + S-adenosyl-L-methionine = 5-methoxy-2-methyl-3-(all-trans-decaprenyl)benzene-1,4-diol + S-adenosyl-L-homocysteine + H(+). It participates in cofactor biosynthesis; ubiquinone biosynthesis. In terms of biological role, methyltransferase required for the conversion of 2-decaprenyl-6-methoxy-1,4-benzoquinol (DDMQH2) to 2-decaprenyl-3-methyl-6-methoxy-1,4-benzoquinol (DMQH2). The sequence is that of 2-methoxy-6-polyprenyl-1,4-benzoquinol methylase, mitochondrial from Rattus norvegicus (Rat).